The primary structure comprises 133 residues: Profilin-1 (133 aa).

Belongs to the profilin family. In terms of assembly, occurs in many kinds of cells as a complex with monomeric actin in a 1:1 ratio. Ubiquitous.

It is found in the cytoplasm. Its subcellular location is the cytoskeleton. Functionally, binds to actin and affects the structure of the cytoskeleton. At high concentrations, profilin prevents the polymerization of actin, whereas it enhances it at low concentrations. By binding to PIP2, it inhibits the formation of IP3 and DG. The chain is Profilin-1 (PRO1) from Solanum lycopersicum (Tomato).